Reading from the N-terminus, the 445-residue chain is Acyl-CoA Delta-4 desaturase (445 aa).

Residues Ala19–Ala96 enclose the Cytochrome b5 heme-binding domain. A run of 4 helical transmembrane segments spans residues Leu132–Val152, Trp153–Gln173, Tyr266–Met286, and Tyr307–Ala327.

It belongs to the fatty acid desaturase type 1 family.

The protein localises to the membrane. The catalysed reaction is (8Z,11Z,14Z,17Z)-eicosatetraenoyl-CoA + 2 Fe(II)-[cytochrome b5] + O2 + 2 H(+) = (5Z,8Z,11Z,14Z,17Z)-eicosapentaenoyl-CoA + 2 Fe(III)-[cytochrome b5] + 2 H2O. It carries out the reaction (7Z,10Z,13Z,16Z)-docosatetraenoyl-CoA + 2 Fe(II)-[cytochrome b5] + O2 + 2 H(+) = (4Z,7Z,10Z,13Z,16Z)-docosapentaenoyl-CoA + 2 Fe(III)-[cytochrome b5] + 2 H2O. It catalyses the reaction (7Z,10Z,13Z,16Z,19Z)-docosapentaenoyl-CoA + 2 Fe(II)-[cytochrome b5] + O2 + 2 H(+) = (4Z,7Z,10Z,13Z,16Z,19Z)-docosahexaenoyl-CoA + 2 Fe(III)-[cytochrome b5] + 2 H2O. It participates in lipid metabolism; polyunsaturated fatty acid biosynthesis. Functionally, fatty acid desaturase with bifunctional delta-4 and delta-5 activities. Component of a lipid metabolic pathway that catalyzes the biosynthesis of polyunsaturated fatty acids (PUFA) with preference toward n-3 substrates and Delta(4)function. This chain is Acyl-CoA Delta-4 desaturase, found in Siganus canaliculatus (White-spotted spinefoot).